We begin with the raw amino-acid sequence, 255 residues long: UPF0246 protein DP0358 (255 aa).

Belongs to the UPF0246 family.

The sequence is that of UPF0246 protein DP0358 from Desulfotalea psychrophila (strain LSv54 / DSM 12343).